A 224-amino-acid polypeptide reads, in one-letter code: Cysteine-rich hydrophobic domain-containing protein 1 (224 aa).

The disordered stretch occupies residues Met-1–His-80. Residues Thr-13–Ala-25 are compositionally biased toward acidic residues. Positions Ala-26–Gly-40 are enriched in low complexity. Acidic residues predominate over residues Pro-41–Ala-69. The stretch at Asp-42–Pro-70 forms a coiled coil.

This sequence belongs to the CHIC family. Post-translationally, palmitoylated. As to expression, equally expressed in various parts of the brain.

It is found in the cell membrane. It localises to the cytoplasmic vesicle. This is Cysteine-rich hydrophobic domain-containing protein 1 (CHIC1) from Homo sapiens (Human).